The primary structure comprises 400 residues: Tryptophan 2,3-dioxygenase (400 aa).

Substrate-binding positions include 75–79 and Arg-146; that span reads FIIIH. Residue His-332 participates in heme binding. Thr-346 contributes to the substrate binding site.

It belongs to the tryptophan 2,3-dioxygenase family. In terms of assembly, homotetramer. Dimer of dimers. Heme serves as cofactor.

The catalysed reaction is L-tryptophan + O2 = N-formyl-L-kynurenine. It participates in amino-acid degradation; L-tryptophan degradation via kynurenine pathway; L-kynurenine from L-tryptophan: step 1/2. In terms of biological role, heme-dependent dioxygenase that catalyzes the oxidative cleavage of the L-tryptophan (L-Trp) pyrrole ring and converts L-tryptophan to N-formyl-L-kynurenine. Catalyzes the oxidative cleavage of the indole moiety. This Dictyostelium discoideum (Social amoeba) protein is Tryptophan 2,3-dioxygenase.